The primary structure comprises 145 residues: Internal scaffolding protein VP3 (145 aa).

The protein belongs to the microviridae B protein family.

It is found in the host cytoplasm. In terms of biological role, participates in the assembly of the viral procapsid in the cytoplasm. Released from the procapsid upon genome packaging, possibly through affinity displacement by the protein ORF8, or by proteolysis. This chain is Internal scaffolding protein VP3, found in Chlamydia phage 1 (Bacteriophage Chp1).